The primary structure comprises 1225 residues: uncharacterized protein (1225 aa).

Positions 1 to 27 (MKRFLHRVKWPLLLSSIAVSLGIVAVA) are cleaved as a signal peptide. The N-palmitoyl cysteine moiety is linked to residue cysteine 28. Cysteine 28 carries the S-diacylglycerol cysteine lipid modification. The tract at residues 995–1014 (QSEKSSSNGGQAQLQSTQSS) is disordered.

This sequence belongs to the MG307/MG309/MG338 family.

It localises to the cell membrane. This is an uncharacterized protein from Mycoplasma genitalium (strain ATCC 33530 / DSM 19775 / NCTC 10195 / G37) (Mycoplasmoides genitalium).